The primary structure comprises 570 residues: RNA polymerase I termination factor (570 aa).

Residues 1 to 16 (MDSVSNLKSTNFQNNN) show a composition bias toward polar residues. 3 disordered regions span residues 1 to 21 (MDSVSNLKSTNFQNNNDPKES), 37 to 68 (HIKKTKKKLKKQKKRKHGSKMSHEDEDTDMDW), and 100 to 138 (SSMREKDKRSCHKKSSNSRSERKKHRKRKSSKERKAKIK). Over residues 37-56 (HIKKTKKKLKKQKKRKHGSK) the composition is skewed to basic residues. At T64 the chain carries Phosphothreonine. Basic residues predominate over residues 108–137 (RSCHKKSSNSRSERKKHRKRKSSKERKAKI). A Myb-like 1 domain is found at 273–339 (KFTPSEENAL…SIYKHIRRKY (67 aa)). The region spanning 340 to 391 (HIFEQRGKWTPEEDQELARLCLEKEGHWTEVGKLLGRMPEDCRDRWRNYMKC) is the HTH myb-type domain. Residues 367-389 (WTEVGKLLGRMPEDCRDRWRNYM) constitute a DNA-binding region (H-T-H motif). 2 consecutive Myb-like domains span residues 392-486 (GSKR…NKLV) and 493-549 (SMLS…MREK).

Interacts with FOB1. Interacts with the RENT complex subunits NET1 and SIR2.

It localises to the nucleus. Its subcellular location is the nucleolus. In terms of biological role, DNA-binding protein that recognizes sequence-specific replication termini (Ter sites) within rDNA. Binds to rDNA terminator elements and mediates efficient RNA polymerase I transcription termination. Required for rDNA silencing at the non-transcribed spacer 1 (NTS1). Promotes the association of SIR2 with NTS1 and contributes to maintenance of rDNA stability. This Saccharomyces cerevisiae (strain ATCC 204508 / S288c) (Baker's yeast) protein is RNA polymerase I termination factor.